A 954-amino-acid chain; its full sequence is Patched domain-containing protein 3 (954 aa).

A compositionally biased stretch (basic and acidic residues) spans 1–20 (MPWVEPKPRPGPEQKPKLTK). The interval 1-103 (MPWVEPKPRP…APLPEEETPE (103 aa)) is disordered. Positions 42–57 (QPPPGPLAPPKSPEPS) are enriched in pro residues. Positions 90-102 (ELDDAPLPEEETP) are enriched in acidic residues. The helical transmembrane segment at 139–159 (WIFLLAPLMLTAALGTGFLYL) threads the bilayer. 3 N-linked (GlcNAc...) asparagine glycosylation sites follow: asparagine 192, asparagine 275, and asparagine 279. 7 helical membrane-spanning segments follow: residues 297–317 (LTGF…QLLL), 383–403 (VIPV…TSCF), 423–443 (FLAV…FVII), 447–467 (SPFL…SAWH), 486–506 (AAVS…TGIM), 520–540 (GMTL…FMAL), and 603–623 (YFVV…CFHV). An SSD domain is found at 383–540 (VIPVFHLAYI…ITCFGAFMAL (158 aa)). Residues asparagine 678, asparagine 692, and asparagine 737 are each glycosylated (N-linked (GlcNAc...) asparagine). 5 helical membrane-spanning segments follow: residues 804–824 (VLVA…YPLC), 826–846 (LWVT…MAFW), 858–878 (LVIC…AFVS), 894–914 (LLGY…CVLA), and 927–947 (IMFL…PVFL).

It belongs to the patched family. In terms of tissue distribution, expressed in germ cells of the testis (at protein level). Detected in blood lymph, colon, small intestine, ovary, testis, prostate, thymus and spleen with highest levels in testis.

It is found in the cell projection. It localises to the cilium. Its subcellular location is the flagellum membrane. The protein localises to the endoplasmic reticulum membrane. May play a role in sperm development or sperm function. However, does not appear to have an essential role in spermatogenesis or male fertility. The sequence is that of Patched domain-containing protein 3 (PTCHD3) from Homo sapiens (Human).